A 123-amino-acid polypeptide reads, in one-letter code: Large ribosomal subunit protein uL14 (123 aa).

It belongs to the universal ribosomal protein uL14 family. As to quaternary structure, part of the 50S ribosomal subunit. Forms a cluster with proteins L3 and L19. In the 70S ribosome, L14 and L19 interact and together make contacts with the 16S rRNA in bridges B5 and B8.

Functionally, binds to 23S rRNA. Forms part of two intersubunit bridges in the 70S ribosome. The sequence is that of Large ribosomal subunit protein uL14 from Pectobacterium atrosepticum (strain SCRI 1043 / ATCC BAA-672) (Erwinia carotovora subsp. atroseptica).